The primary structure comprises 626 residues: UvrABC system protein C (626 aa).

The region spanning 20–97 (ECSGVYKMLD…IKKFQPKFNI (78 aa)) is the GIY-YIG domain. A UVR domain is found at 207–242 (IALQANLSKKMQELSSQMRFEEAAEIRDRIKALSYV).

The protein belongs to the UvrC family. In terms of assembly, interacts with UvrB in an incision complex.

It localises to the cytoplasm. Its function is as follows. The UvrABC repair system catalyzes the recognition and processing of DNA lesions. UvrC both incises the 5' and 3' sides of the lesion. The N-terminal half is responsible for the 3' incision and the C-terminal half is responsible for the 5' incision. The protein is UvrABC system protein C of Rickettsia prowazekii (strain Madrid E).